The chain runs to 83 residues: Acyl carrier protein MmaB (83 aa).

The Carrier domain maps to 3–83 (DPVRQRILLA…LSQSELESPT (81 aa)). S39 bears the O-(pantetheine 4'-phosphoryl)serine mark.

The protein belongs to the acyl carrier protein (ACP) family. The cofactor is pantetheine 4'-phosphate.

The protein operates within lipid metabolism; fatty acid metabolism. Its function is as follows. Acyl-carrier protein (ACP) involved in the biosynthesis of a unique class of isonitrile lipopeptides (INLPs) that seem to play a role in metal acquisition in M.marinum. Is the dedicated ACP for the loading of activated acyl groups catalyzed by MmaC. The chain is Acyl carrier protein MmaB from Mycobacterium marinum (strain ATCC BAA-535 / M).